We begin with the raw amino-acid sequence, 309 residues long: Replication factor C subunit 4 (309 aa).

ATP-binding positions include Val-5, Val-17, 42–50, Asn-134, and Arg-192; that span reads GPPGTGKTT.

It belongs to the activator 1 small subunits family. As to quaternary structure, component of the replication factor C (RFC) complex.

The protein resides in the nucleus. Functionally, component of ATP-dependent clamp loader (RFC and RFC-like) complexes for DNA clamps. During a clamp loading circle, the RFC:clamp complex binds to DNA and the recognition of the double-stranded/single-stranded junction stimulates ATP hydrolysis by RFC. The complex presumably provides bipartite ATP sites in which one subunit supplies a catalytic site for hydrolysis of ATP bound to the neighboring subunit. Dissociation of RFC from the clamp leaves the clamp encircling DNA. Component of the replication factor C (RFC or activator 1) complex which acts during elongation of primed DNA templates by DNA polymerase delta and epsilon. RFC has an essential but redundant activity in sister chromatid cohesion establishment. The sequence is that of Replication factor C subunit 4 (RFC4) from Encephalitozoon cuniculi (strain GB-M1) (Microsporidian parasite).